The chain runs to 281 residues: Probable endonuclease 4 (281 aa).

Zn(2+) contacts are provided by histidine 69, histidine 109, glutamate 145, aspartate 179, histidine 182, histidine 216, aspartate 229, histidine 231, and glutamate 261.

It belongs to the AP endonuclease 2 family. Zn(2+) serves as cofactor.

It carries out the reaction Endonucleolytic cleavage to 5'-phosphooligonucleotide end-products.. In terms of biological role, endonuclease IV plays a role in DNA repair. It cleaves phosphodiester bonds at apurinic or apyrimidinic (AP) sites, generating a 3'-hydroxyl group and a 5'-terminal sugar phosphate. In Aeromonas hydrophila subsp. hydrophila (strain ATCC 7966 / DSM 30187 / BCRC 13018 / CCUG 14551 / JCM 1027 / KCTC 2358 / NCIMB 9240 / NCTC 8049), this protein is Probable endonuclease 4.